Reading from the N-terminus, the 321-residue chain is Prephenate dehydratase (321 aa).

Positions R3–R189 constitute a Prephenate dehydratase domain. Residues S203–P280 enclose the ACT domain.

In terms of assembly, homodimer.

The catalysed reaction is prephenate + H(+) = 3-phenylpyruvate + CO2 + H2O. The protein operates within amino-acid biosynthesis; L-phenylalanine biosynthesis; phenylpyruvate from prephenate: step 1/1. In Mycobacterium bovis (strain ATCC BAA-935 / AF2122/97), this protein is Prephenate dehydratase (pheA).